Reading from the N-terminus, the 576-residue chain is N-acetylmuramoyl-L-alanine amidase (576 aa).

Positions 1–21 (MAQGVLWILLGLLLWSDPGTA) are cleaved as a signal peptide. An N-linked (GlcNAc...) asparagine glycan is attached at Asn-77. Ser-239 is subject to Phosphoserine. A deamidated asparagine mark is found at Asn-274 and Asn-322. Residue Asn-367 is glycosylated (N-linked (GlcNAc...) asparagine). An N-acetylmuramoyl-L-alanine amidase domain is found at 406 to 532 (FLYVHHTYVP…RQLVRTDCPG (127 aa)). A Zn(2+)-binding site is contributed by His-410. A disulfide bridge connects residues Cys-419 and Cys-425. N-linked (GlcNAc...) asparagine glycosylation is present at Asn-485. His-522 and Cys-530 together coordinate Zn(2+). Residues 550–576 (KPRPARSVSKRSRREPPPRTLPATDLQ) are disordered.

It belongs to the N-acetylmuramoyl-L-alanine amidase 2 family. The cofactor is Zn(2+). As to expression, strongly expressed in liver and fetal liver, and secreted into serum. Expressed to a much lesser extent in transverse colon, lymph nodes, heart, thymus, pancreas, descending colon, stomach and testis. Isoform 2 is not detected in the liver or serum.

It localises to the secreted. The protein localises to the membrane. The enzyme catalyses Hydrolyzes the link between N-acetylmuramoyl residues and L-amino acid residues in certain cell-wall glycopeptides.. Its function is as follows. May play a scavenger role by digesting biologically active peptidoglycan (PGN) into biologically inactive fragments. Has no direct bacteriolytic activity. This Homo sapiens (Human) protein is N-acetylmuramoyl-L-alanine amidase (PGLYRP2).